The primary structure comprises 592 residues: Catabolite repression protein creC (592 aa).

The segment at 119-140 (NSALAAAPVKDPSKKRKPKNNI) is disordered. WD repeat units follow at residues 248-288 (INSS…ALFI), 327-368 (LANQ…DVFR), 369-408 (SYYGGFTCVCWSPDGKYIVTGGQDDLVTIWSLPERKIIAR), and 411-455 (GHDS…LHRP). Disordered stretches follow at residues 459-513 (HQTS…HPVE) and 556-592 (WDRPRENISDNYGDQKSSETLGTGKEAGHPASSMGSL). 2 stretches are compositionally biased toward polar residues: residues 484–499 (SSGNRMRSDSQRTAAD) and 564–576 (SDNYGDQKSSETL). Residues 529-566 (VGEDPICWLGFQEDTIMTSSLEGHIRTWDRPRENISDN) form a WD 5 repeat.

This sequence belongs to the WD repeat creC family. In terms of assembly, interacts with creB.

Component of the regulatory network controlling carbon source utilization through ubiquitination and deubiquitination involving creA, creB, creC, creD and acrB. Required to prevent the proteolysis of the CreB deubiquitinating enzyme in the absence of carbon catabolite repression. CreB deubiquitinating enzyme stabilized in a complex with the CreC leads to the expression of genes such as those in the proline and quinate pathways. This Emericella nidulans (strain FGSC A4 / ATCC 38163 / CBS 112.46 / NRRL 194 / M139) (Aspergillus nidulans) protein is Catabolite repression protein creC (creC).